The chain runs to 617 residues: Syncytin-A (617 aa).

An N-terminal signal peptide occupies residues 1-17 (MVRPWVFCLLLFPCSSA). The Extracellular segment spans residues 18–544 (YSDSWMPLVN…WIQWLGLGPW (527 aa)). Asn-27 carries N-linked (GlcNAc...) asparagine glycosylation. Residues 44–47 (CWVC) carry the CXXC motif. 3 disulfides stabilise this stretch: Cys-44/Cys-47, Cys-44/Cys-505, and Cys-497/Cys-504. 2 N-linked (GlcNAc...) asparagine glycosylation sites follow: Asn-272 and Asn-365. The fusion peptide stretch occupies residues 420-440 (LLPLLAGLGIASALGLGIAGI). The CX6CC signature appears at 497–505 (CLFLQEECC). A helical membrane pass occupies residues 545–565 (LPSWLTSLMAPILFILVLLVF). Residues 566 to 617 (RPCLLNCLTHSVSRRMSSFIHTTTEGHVDKILLLRESQYKRLPQEPPEEDAV) lie on the Cytoplasmic side of the membrane.

The protein belongs to the gamma type-C retroviral envelope protein family. The mature protein consists of a trimer of SU-TM heterodimers. The SU-TM heterodimers are attached by a labile interchain disulfide bond. Synthesized as an inactive precursor that is heavily N-glycosylated and processed likely by furin in the Golgi to yield the mature SU and TM proteins. The cleavage site between SU and TM requires the minimal sequence [KR]-X-[KR]-R. In terms of processing, the CXXC motif is highly conserved across a broad range of retroviral envelope proteins. It is thought to participate in the formation of a labile disulfide bond possibly with the CX6CC motif present in the transmembrane protein. Isomerization of the intersubunit disulfide bond to an SU intrachain disulfide bond is thought to occur upon receptor recognition in order to allow membrane fusion. Highly expressed in placenta where it localizes to syncytiotrophoblasts of the labyrinthine zona. Specifically localizes to syncytiotrophoblast layer I (SynT-I). Also detected at very low levels in hippocampus, brain, testis and ovary.

The protein localises to the cell membrane. In terms of biological role, this endogenous retroviral envelope protein has retained its original fusogenic properties. Together with Synb, participates in trophoblast fusion and the formation of a syncytium during placenta morphogenesis. Syna is essential for placental development and is specifically required for formation of syncytiotrophoblast layer I (SynT-I). Promotes muscle myoblast fusion. Does not have immunosuppressive activity. This chain is Syncytin-A, found in Mus musculus (Mouse).